Here is a 285-residue protein sequence, read N- to C-terminus: CCR4-NOT transcription complex subunit 7 (285 aa).

The a divalent metal cation site is built by Asp40, Glu42, Asp161, Asp230, and Glu278.

The protein belongs to the CAF1 family. In terms of assembly, component of the CCR4-NOT complex. It depends on Mn(2+) as a cofactor. Requires Mg(2+) as cofactor. The cofactor is Co(2+).

The protein resides in the nucleus. The protein localises to the cytoplasm. It carries out the reaction Exonucleolytic cleavage of poly(A) to 5'-AMP.. Functionally, has 3'-5' poly(A) exoribonuclease activity for synthetic poly(A) RNA substrate. Catalytic component of the CCR4-NOT complex which is one of the major cellular mRNA deadenylases and is linked to various cellular processes including bulk mRNA degradation, miRNA-mediated repression, translational repression during translational initiation and general transcription regulation. During miRNA-mediated repression the complex also seems to act as translational repressor during translational initiation. Additional complex functions may be a consequence of its influence on mRNA expression. This chain is CCR4-NOT transcription complex subunit 7 (CNOT7), found in Gallus gallus (Chicken).